The primary structure comprises 305 residues: D-alanine--D-alanine ligase (305 aa).

The 197-residue stretch at 104–300 folds into the ATP-grasp domain; it reads RALFASAGIP…FPELVRWMVE (197 aa). 131-181 serves as a coordination point for ATP; that stretch reads LPRPFVVKPLNEGSSVGVFIVRDNQPSPLPDWPFDADEVLVESFIPGRELT. Mg(2+) is bound by residues Asp-249, Glu-267, and Asn-269.

This sequence belongs to the D-alanine--D-alanine ligase family. It depends on Mg(2+) as a cofactor. Mn(2+) serves as cofactor.

The protein localises to the cytoplasm. The enzyme catalyses 2 D-alanine + ATP = D-alanyl-D-alanine + ADP + phosphate + H(+). The protein operates within cell wall biogenesis; peptidoglycan biosynthesis. Functionally, cell wall formation. The chain is D-alanine--D-alanine ligase from Paramagnetospirillum magneticum (strain ATCC 700264 / AMB-1) (Magnetospirillum magneticum).